We begin with the raw amino-acid sequence, 245 residues long: 5-oxoprolinase subunit A (245 aa).

This sequence belongs to the LamB/PxpA family. In terms of assembly, forms a complex composed of PxpA, PxpB and PxpC.

It carries out the reaction 5-oxo-L-proline + ATP + 2 H2O = L-glutamate + ADP + phosphate + H(+). Functionally, catalyzes the cleavage of 5-oxoproline to form L-glutamate coupled to the hydrolysis of ATP to ADP and inorganic phosphate. This Yersinia enterocolitica serotype O:8 / biotype 1B (strain NCTC 13174 / 8081) protein is 5-oxoprolinase subunit A.